A 118-amino-acid polypeptide reads, in one-letter code: Large ribosomal subunit protein bL20c (118 aa).

This sequence belongs to the bacterial ribosomal protein bL20 family.

The protein resides in the plastid. It is found in the chloroplast. Functionally, binds directly to 23S ribosomal RNA and is necessary for the in vitro assembly process of the 50S ribosomal subunit. It is not involved in the protein synthesizing functions of that subunit. This chain is Large ribosomal subunit protein bL20c, found in Adiantum capillus-veneris (Maidenhair fern).